A 397-amino-acid polypeptide reads, in one-letter code: Cell division protein DivIB (397 aa).

Residues 1–138 (MTTKDKGDQK…RIERIHLYRA (138 aa)) are Cytoplasmic-facing. Residues 24–37 (QEYLEKKSQEKASE) are compositionally biased toward basic and acidic residues. The tract at residues 24–115 (QEYLEKKSQE…DRTEKFIGQA (92 aa)) is disordered. A compositionally biased stretch (acidic residues) spans 74–103 (ASDDDETNESEESEDVEEPEEENIEESSDV). The helical transmembrane segment at 139–159 (LPVLVISSLLILLSLYFITPL) threads the bilayer. Residues 160–231 (GSLKNLVVTG…ITFKIQVTEY (72 aa)) enclose the POTRA domain. The Extracellular segment spans residues 160–397 (GSLKNLVVTG…PSDVTDETNN (238 aa)). A disordered region spans residues 360–397 (LVQKEEQDQEQEKEESSEETVPGETEAAPSDVTDETNN). A compositionally biased stretch (acidic residues) spans 366–377 (QDQEQEKEESSE).

This sequence belongs to the FtsQ/DivIB family. DivIB subfamily.

Its subcellular location is the cell membrane. Cell division protein that may be involved in stabilizing or promoting the assembly of the division complex. The sequence is that of Cell division protein DivIB from Streptococcus gordonii (strain Challis / ATCC 35105 / BCRC 15272 / CH1 / DL1 / V288).